The sequence spans 216 residues: Transmembrane emp24 domain-containing protein eca (216 aa).

The first 20 residues, 1–20, serve as a signal peptide directing secretion; the sequence is MRDQFISLALMLCILHSACG. At 21 to 182 the chain is on the lumenal side; that stretch reads LYFHISETER…FRHTSESTNS (162 aa). A GOLD domain is found at 30–126; the sequence is RKCFIEEVPD…QLRVHLDIQV (97 aa). Positions 134-164 form a coiled coil; it reads ANVAQKEKLTELQLRIRQLLDQVEQITKEQN. The chain crosses the membrane as a helical span at residues 183-203; the sequence is RVLWWSLAQTVVLVCMGFWQM. The Cytoplasmic segment spans residues 204–216; the sequence is RHLKSFFEAKKLV. A Prevents secretion from ER motif is present at residues 213–216; it reads KKLV.

Belongs to the EMP24/GP25L family.

It is found in the endoplasmic reticulum membrane. Functionally, eca and bai are essential, though not redundant, for dorsoventral patterning of the embryo. Specifically required during early embryogenesis for the activity of maternal tkv, while the zygotic tkv is not affected. Involved in Golgi organization. The polypeptide is Transmembrane emp24 domain-containing protein eca (Drosophila erecta (Fruit fly)).